The following is a 185-amino-acid chain: Pericyclase pydY (185 aa).

This sequence belongs to the pericyclase pydY family.

Its pathway is mycotoxin biosynthesis. Pericyclase; part of the gene cluster that mediates the biosynthesis of pyrrocidines, fungal natural products containing a macrocyclic para-cyclophane connected to a decahydrofluorene ring system that show potent antibiotic activities toward Gram-negative bacteria. Within the pathway, pydY is involved in the late Diels-Alder cycloaddition step that leads to the formation of the decahydrofluorene core. The pathway begins with the PKS-NRPS pydA which, with the help of the trans-enoyl reductase pydC, synthesizes the polyketide-tyrosyl acyl thioester product which can be reductively off-loaded by the terminal reductase (R) domain in pydA. The alpha/beta hydrolase pydG is then required to catalyze the subsequent Knoevenagel condensation that affords the 3-pyrrolin-2-one ring, whereas the four proteins pydB, pydE, pydX and pydZ then function synergistically to form the cyclophane. PydB and the membrane-bound pydX and pydZ are lipid-binding proteins that can sequester and mold the pdyG product into the inverse S-shape. Binding of the medium chain reductase pydE to the complex would trigger the cascade oxidative cyclization. PydY is involved in the Diels-Alder cycloaddition that forms the decahydrofluorene core. Additional non-enzymatic hydroxylation yields pyrrocidine A2 which can be further reduced into pyrrocidine B by an endogenous reductase. This is Pericyclase pydY from Acremonium sp.